The sequence spans 217 residues: Non-structural protein NS3 (217 aa).

The protein belongs to the orbivirus NS3 family.

Functionally, may play a role in the release of virions from infected cells. The chain is Non-structural protein NS3 (Segment-10) from African horse sickness virus 9 (AHSV-9).